Reading from the N-terminus, the 307-residue chain is 4-hydroxythreonine-4-phosphate dehydrogenase (307 aa).

Substrate-binding residues include H126 and T127. A divalent metal cation-binding residues include H156, H195, and H251. Substrate-binding residues include K259, N268, and R277.

The protein belongs to the PdxA family. Homodimer. It depends on Zn(2+) as a cofactor. Requires Mg(2+) as cofactor. The cofactor is Co(2+).

It localises to the cytoplasm. The enzyme catalyses 4-(phosphooxy)-L-threonine + NAD(+) = 3-amino-2-oxopropyl phosphate + CO2 + NADH. Its pathway is cofactor biosynthesis; pyridoxine 5'-phosphate biosynthesis; pyridoxine 5'-phosphate from D-erythrose 4-phosphate: step 4/5. In terms of biological role, catalyzes the NAD(P)-dependent oxidation of 4-(phosphooxy)-L-threonine (HTP) into 2-amino-3-oxo-4-(phosphooxy)butyric acid which spontaneously decarboxylates to form 3-amino-2-oxopropyl phosphate (AHAP). This is 4-hydroxythreonine-4-phosphate dehydrogenase from Helicobacter pylori (strain G27).